The sequence spans 157 residues: Putative tRNA (cytidine(34)-2'-O)-methyltransferase (157 aa).

Residues isoleucine 79, glycine 104, and isoleucine 125 each coordinate S-adenosyl-L-methionine.

This sequence belongs to the class IV-like SAM-binding methyltransferase superfamily. RNA methyltransferase TrmH family. TrmL subfamily.

The protein resides in the cytoplasm. It carries out the reaction cytidine(34) in tRNA + S-adenosyl-L-methionine = 2'-O-methylcytidine(34) in tRNA + S-adenosyl-L-homocysteine + H(+). The catalysed reaction is 5-carboxymethylaminomethyluridine(34) in tRNA(Leu) + S-adenosyl-L-methionine = 5-carboxymethylaminomethyl-2'-O-methyluridine(34) in tRNA(Leu) + S-adenosyl-L-homocysteine + H(+). Could methylate the ribose at the nucleotide 34 wobble position in tRNA. The protein is Putative tRNA (cytidine(34)-2'-O)-methyltransferase of Geobacillus stearothermophilus (Bacillus stearothermophilus).